We begin with the raw amino-acid sequence, 228 residues long: 5'-methylthioadenosine/S-adenosylhomocysteine nucleosidase (228 aa).

The active-site Proton acceptor is the Glu11. Residues Gly77, Ile151, and 172–173 (ME) contribute to the substrate site. The Proton donor role is filled by Asp196.

It belongs to the PNP/UDP phosphorylase family. MtnN subfamily.

It catalyses the reaction S-adenosyl-L-homocysteine + H2O = S-(5-deoxy-D-ribos-5-yl)-L-homocysteine + adenine. It carries out the reaction S-methyl-5'-thioadenosine + H2O = 5-(methylsulfanyl)-D-ribose + adenine. The enzyme catalyses 5'-deoxyadenosine + H2O = 5-deoxy-D-ribose + adenine. It participates in amino-acid biosynthesis; L-methionine biosynthesis via salvage pathway; S-methyl-5-thio-alpha-D-ribose 1-phosphate from S-methyl-5'-thioadenosine (hydrolase route): step 1/2. In terms of biological role, catalyzes the irreversible cleavage of the glycosidic bond in both 5'-methylthioadenosine (MTA) and S-adenosylhomocysteine (SAH/AdoHcy) to adenine and the corresponding thioribose, 5'-methylthioribose and S-ribosylhomocysteine, respectively. Also cleaves 5'-deoxyadenosine, a toxic by-product of radical S-adenosylmethionine (SAM) enzymes, into 5-deoxyribose and adenine. This chain is 5'-methylthioadenosine/S-adenosylhomocysteine nucleosidase, found in Staphylococcus carnosus (strain TM300).